A 104-amino-acid polypeptide reads, in one-letter code: Large ribosomal subunit protein uL24 (104 aa).

It belongs to the universal ribosomal protein uL24 family. As to quaternary structure, part of the 50S ribosomal subunit.

One of two assembly initiator proteins, it binds directly to the 5'-end of the 23S rRNA, where it nucleates assembly of the 50S subunit. Functionally, one of the proteins that surrounds the polypeptide exit tunnel on the outside of the subunit. The protein is Large ribosomal subunit protein uL24 of Bartonella quintana (strain Toulouse) (Rochalimaea quintana).